We begin with the raw amino-acid sequence, 405 residues long: Tyrosine--tRNA ligase (405 aa).

The 'HIGH' region signature appears at proline 48–histidine 57. The 'KMSKS' region signature appears at lysine 232 to serine 236. Lysine 235 contacts ATP. The 62-residue stretch at isoleucine 343–phenylalanine 404 folds into the S4 RNA-binding domain.

It belongs to the class-I aminoacyl-tRNA synthetase family. TyrS type 2 subfamily. Homodimer.

It localises to the cytoplasm. It catalyses the reaction tRNA(Tyr) + L-tyrosine + ATP = L-tyrosyl-tRNA(Tyr) + AMP + diphosphate + H(+). In terms of biological role, catalyzes the attachment of tyrosine to tRNA(Tyr) in a two-step reaction: tyrosine is first activated by ATP to form Tyr-AMP and then transferred to the acceptor end of tRNA(Tyr). The protein is Tyrosine--tRNA ligase of Desulfotalea psychrophila (strain LSv54 / DSM 12343).